Consider the following 197-residue polypeptide: Isopentenyl-diphosphate Delta-isomerase (197 aa).

Residues H41 and H48 each contribute to the Mn(2+) site. Positions 46 to 183 (QLHRAFSVFL…AWFMTVLDAA (138 aa)) constitute a Nudix hydrolase domain. The active site involves C83. H85 is a Mn(2+) binding site. A Mg(2+)-binding site is contributed by E103. The Mn(2+) site is built by E130 and E132. Residue E132 is part of the active site.

The protein belongs to the IPP isomerase type 1 family. The cofactor is Mg(2+). Requires Mn(2+) as cofactor.

The protein resides in the cytoplasm. The catalysed reaction is isopentenyl diphosphate = dimethylallyl diphosphate. It participates in isoprenoid biosynthesis; dimethylallyl diphosphate biosynthesis; dimethylallyl diphosphate from isopentenyl diphosphate: step 1/1. Functionally, catalyzes the 1,3-allylic rearrangement of the homoallylic substrate isopentenyl (IPP) to its highly electrophilic allylic isomer, dimethylallyl diphosphate (DMAPP). The protein is Isopentenyl-diphosphate Delta-isomerase of Streptomyces griseus subsp. griseus (strain JCM 4626 / CBS 651.72 / NBRC 13350 / KCC S-0626 / ISP 5235).